Consider the following 310-residue polypeptide: Putative HTH-type transcriptional regulatory protein YN1551_1579 (310 aa).

Positions 125–180 (LKHKREEMGYSIGDVAKFLGVSRKAIYDYEKGDSDVSLEVAEKLIDLFGDDIIGDV) constitute an HTH cro/C1-type domain. A DNA-binding region (H-T-H motif) is located at residues 136 to 155 (IGDVAKFLGVSRKAIYDYEK).

In Saccharolobus islandicus (strain Y.N.15.51 / Yellowstone #2) (Sulfolobus islandicus), this protein is Putative HTH-type transcriptional regulatory protein YN1551_1579.